The primary structure comprises 397 residues: Arginine biosynthesis bifunctional protein ArgJ (397 aa).

Positions 147, 173, 184, 270, 392, and 397 each coordinate substrate. The active-site Nucleophile is Thr184.

This sequence belongs to the ArgJ family. Heterotetramer of two alpha and two beta chains.

It is found in the cytoplasm. The enzyme catalyses N(2)-acetyl-L-ornithine + L-glutamate = N-acetyl-L-glutamate + L-ornithine. It catalyses the reaction L-glutamate + acetyl-CoA = N-acetyl-L-glutamate + CoA + H(+). Its pathway is amino-acid biosynthesis; L-arginine biosynthesis; L-ornithine and N-acetyl-L-glutamate from L-glutamate and N(2)-acetyl-L-ornithine (cyclic): step 1/1. It participates in amino-acid biosynthesis; L-arginine biosynthesis; N(2)-acetyl-L-ornithine from L-glutamate: step 1/4. In terms of biological role, catalyzes two activities which are involved in the cyclic version of arginine biosynthesis: the synthesis of N-acetylglutamate from glutamate and acetyl-CoA as the acetyl donor, and of ornithine by transacetylation between N(2)-acetylornithine and glutamate. This chain is Arginine biosynthesis bifunctional protein ArgJ, found in Streptococcus thermophilus (strain CNRZ 1066).